Reading from the N-terminus, the 262-residue chain is Lectin (262 aa).

The N-terminal stretch at 1–21 (MASSVLLVLSLFLVLLLTQAS) is a signal peptide. 5 N-linked (GlcNAc...) asparagine glycosylation sites follow: asparagine 53, asparagine 82, asparagine 100, asparagine 129, and asparagine 205.

This sequence belongs to the leguminous lectin family.

Its function is as follows. This metalloglycoprotein, containing Ca(2+), Mn(2+), binds glycoconjugates containing terminal non-reducing alpha-D-GalNAc residues. The protein is Lectin of Phaseolus lunatus (Lima bean).